Consider the following 78-residue polypeptide: MEKQNLIDMEGVVTESLPNAMFRVCLDNGCQVLTHISGKIRRNYIRILPGDRVKVELSPYDLTKGRITYRLRTKSSNP.

One can recognise an S1-like domain in the interval 1-72 (MEKQNLIDME…TKGRITYRLR (72 aa)).

The protein belongs to the IF-1 family. Component of the 30S ribosomal translation pre-initiation complex which assembles on the 30S ribosome in the order IF-2 and IF-3, IF-1 and N-formylmethionyl-tRNA(fMet); mRNA recruitment can occur at any time during PIC assembly.

Its subcellular location is the plastid. The protein localises to the chloroplast. In terms of biological role, one of the essential components for the initiation of protein synthesis. Stabilizes the binding of IF-2 and IF-3 on the 30S subunit to which N-formylmethionyl-tRNA(fMet) subsequently binds. Helps modulate mRNA selection, yielding the 30S pre-initiation complex (PIC). Upon addition of the 50S ribosomal subunit IF-1, IF-2 and IF-3 are released leaving the mature 70S translation initiation complex. This Anthoceros angustus (Hornwort) protein is Translation initiation factor IF-1, chloroplastic.